The sequence spans 140 residues: Nucleoside diphosphate kinase (140 aa).

Positions 11, 59, 87, 93, 104, and 114 each coordinate ATP. The active-site Pros-phosphohistidine intermediate is His117.

It belongs to the NDK family. In terms of assembly, homotetramer. Requires Mg(2+) as cofactor.

The protein localises to the cytoplasm. It carries out the reaction a 2'-deoxyribonucleoside 5'-diphosphate + ATP = a 2'-deoxyribonucleoside 5'-triphosphate + ADP. It catalyses the reaction a ribonucleoside 5'-diphosphate + ATP = a ribonucleoside 5'-triphosphate + ADP. Major role in the synthesis of nucleoside triphosphates other than ATP. The ATP gamma phosphate is transferred to the NDP beta phosphate via a ping-pong mechanism, using a phosphorylated active-site intermediate. The chain is Nucleoside diphosphate kinase from Mesorhizobium japonicum (strain LMG 29417 / CECT 9101 / MAFF 303099) (Mesorhizobium loti (strain MAFF 303099)).